A 153-amino-acid chain; its full sequence is Arachidonate 5-lipoxygenase-activating protein (153 aa).

The Lumenal portion of the chain corresponds to 1–8; that stretch reads MDQEAMGN. Residues 9–30 form a helical membrane-spanning segment; it reads IVLLAIVTLISVVQNAFFAHKV. Over 31–52 the chain is Cytoplasmic; sequence EHESKTHNGRSFQRTGTPAFER. The chain crosses the membrane as a helical span at residues 53 to 77; the sequence is VYTANQNCVDAYPTFLVVLWSAGLF. The Lumenal segment spans residues 78 to 80; that stretch reads CSQ. A helical membrane pass occupies residues 81–102; the sequence is VPAAFAGLMYLFVRQKYFVGYL. The Cytoplasmic segment spans residues 103-107; it reads GERTQ. The stretch at 108 to 115 is an intramembrane region; sequence STPGYIFG. The helical transmembrane segment at 116-128 threads the bilayer; the sequence is KRIILFLFLMSLA. Topologically, residues 129-153 are lumenal; the sequence is GIFNYFLILFFGSDFENYIKTITTT.

It belongs to the MAPEG family. As to quaternary structure, homotrimer. Interacts with LTC4S and ALOX5.

It localises to the nucleus membrane. Its subcellular location is the endoplasmic reticulum membrane. Its function is as follows. Required for leukotriene biosynthesis by ALOX5 (5-lipoxygenase). Anchors ALOX5 to the membrane. Binds arachidonic acid, and could play an essential role in the transfer of arachidonic acid to ALOX5. Binds to MK-886, a compound that blocks the biosynthesis of leukotrienes. This is Arachidonate 5-lipoxygenase-activating protein (ALOX5AP) from Sus scrofa (Pig).